Reading from the N-terminus, the 396-residue chain is Elongation factor Tu 2 (396 aa).

Positions 10–206 (KPHVNVGTIG…ALDTYIPTPE (197 aa)) constitute a tr-type G domain. Residues 19 to 26 (GHVDHGKT) form a G1 region. Residue 19-26 (GHVDHGKT) coordinates GTP. A Mg(2+)-binding site is contributed by Thr-26. The G2 stretch occupies residues 60-64 (GITIN). Positions 81–84 (DCPG) are G3. GTP contacts are provided by residues 81-85 (DCPGH) and 136-139 (NKAD). Positions 136–139 (NKAD) are G4. The G5 stretch occupies residues 174 to 176 (SAK).

It belongs to the TRAFAC class translation factor GTPase superfamily. Classic translation factor GTPase family. EF-Tu/EF-1A subfamily. As to quaternary structure, monomer.

Its subcellular location is the cytoplasm. It catalyses the reaction GTP + H2O = GDP + phosphate + H(+). Functionally, GTP hydrolase that promotes the GTP-dependent binding of aminoacyl-tRNA to the A-site of ribosomes during protein biosynthesis. This chain is Elongation factor Tu 2, found in Methylobacillus flagellatus (strain ATCC 51484 / DSM 6875 / VKM B-1610 / KT).